The chain runs to 1886 residues: Polyprotein P3 (1886 aa).

Disordered regions lie at residues 1 to 24 (MATR…SGVP), 420 to 466 (RCDS…MQDD), and 478 to 529 (RMKK…NQPE). Polar residues predominate over residues 9–20 (VTQTDGSRTATE). Residues 488–498 (QQALSSQAQEE) show a composition bias toward low complexity. The CCHC-type zinc finger occupies 879–896 (CKCYICGQEGHYANQCRN). Positions 1215 to 1292 (INAIVDTGAT…GLSPGIQMII (78 aa)) constitute a Peptidase A2 domain. Catalysis depends on Asp-1220, which acts as the For protease activity. In terms of domain architecture, Reverse transcriptase spans 1425 to 1615 (LLQMKVIRPS…PEIDFLGASL (191 aa)). The RNase H type-1 domain occupies 1706 to 1841 (KDSFIIIETD…ADALSRMINF (136 aa)). Mg(2+)-binding residues include Asp-1715, Glu-1758, Asp-1784, and Asp-1833.

Post-translationally, polyprotein P3 is presumably proteolytically cleaved into several chains by viral protease.

The enzyme catalyses Endonucleolytic cleavage to 5'-phosphomonoester.. It carries out the reaction DNA(n) + a 2'-deoxyribonucleoside 5'-triphosphate = DNA(n+1) + diphosphate. Capsid protein self assembles to form a bacilliform capsid about 90-900 nm in length. The capsid encapsulates the genomic dsDNA. Following virus entry into host cell, provides nuclear import of the viral genome. Virus particles do not enter the nucleus, but are targeted to the nuclear membrane through the interaction with host importins. The polypeptide is Polyprotein P3 (Commelina yellow mottle virus (CoYMV)).